Consider the following 386-residue polypeptide: Succinate--CoA ligase [ADP-forming] subunit beta (386 aa).

The ATP-grasp domain maps to 9-244 (KAVLRSYGVS…LDEEDAKEIE (236 aa)). Residues K46, 53–55 (GRG), E99, C102, and E107 contribute to the ATP site. Positions 199 and 213 each coordinate Mg(2+). Substrate-binding positions include N264 and 321–323 (GIM).

The protein belongs to the succinate/malate CoA ligase beta subunit family. As to quaternary structure, heterotetramer of two alpha and two beta subunits. Mg(2+) is required as a cofactor.

It carries out the reaction succinate + ATP + CoA = succinyl-CoA + ADP + phosphate. It catalyses the reaction GTP + succinate + CoA = succinyl-CoA + GDP + phosphate. It functions in the pathway carbohydrate metabolism; tricarboxylic acid cycle; succinate from succinyl-CoA (ligase route): step 1/1. Its function is as follows. Succinyl-CoA synthetase functions in the citric acid cycle (TCA), coupling the hydrolysis of succinyl-CoA to the synthesis of either ATP or GTP and thus represents the only step of substrate-level phosphorylation in the TCA. The beta subunit provides nucleotide specificity of the enzyme and binds the substrate succinate, while the binding sites for coenzyme A and phosphate are found in the alpha subunit. The protein is Succinate--CoA ligase [ADP-forming] subunit beta of Bacillus anthracis (strain A0248).